Consider the following 399-residue polypeptide: Acetate kinase (399 aa).

Asn10 provides a ligand contact to Mg(2+). Lys17 serves as a coordination point for ATP. Arg91 lines the substrate pocket. Catalysis depends on Asp148, which acts as the Proton donor/acceptor. ATP contacts are provided by residues 208-212 (HLGNG), 283-285 (DCR), and 331-335 (GIGEN). A Mg(2+)-binding site is contributed by Glu385.

Belongs to the acetokinase family. In terms of assembly, homodimer. The cofactor is Mg(2+). It depends on Mn(2+) as a cofactor.

The protein resides in the cytoplasm. The catalysed reaction is acetate + ATP = acetyl phosphate + ADP. Its pathway is metabolic intermediate biosynthesis; acetyl-CoA biosynthesis; acetyl-CoA from acetate: step 1/2. In terms of biological role, catalyzes the formation of acetyl phosphate from acetate and ATP. Can also catalyze the reverse reaction. In Shewanella baltica (strain OS223), this protein is Acetate kinase.